We begin with the raw amino-acid sequence, 369 residues long: DNA replication and repair protein RecF (369 aa).

30–37 (GDNGSGKT) provides a ligand contact to ATP.

It belongs to the RecF family.

It localises to the cytoplasm. In terms of biological role, the RecF protein is involved in DNA metabolism; it is required for DNA replication and normal SOS inducibility. RecF binds preferentially to single-stranded, linear DNA. It also seems to bind ATP. This is DNA replication and repair protein RecF from Pseudomonas aeruginosa (strain LESB58).